Reading from the N-terminus, the 273-residue chain is Dermonecrotic toxin LruSicTox-alphaIC1a (273 aa).

H5 is an active-site residue. 2 residues coordinate Mg(2+): E25 and D27. Residue H41 is the Nucleophile of the active site. Intrachain disulfides connect C45-C51 and C47-C190. Residue D85 coordinates Mg(2+).

The protein belongs to the arthropod phospholipase D family. Class II subfamily. Mg(2+) is required as a cofactor. Expressed by the venom gland.

Its subcellular location is the secreted. The enzyme catalyses an N-(acyl)-sphingosylphosphocholine = an N-(acyl)-sphingosyl-1,3-cyclic phosphate + choline. The catalysed reaction is an N-(acyl)-sphingosylphosphoethanolamine = an N-(acyl)-sphingosyl-1,3-cyclic phosphate + ethanolamine. It catalyses the reaction a 1-acyl-sn-glycero-3-phosphocholine = a 1-acyl-sn-glycero-2,3-cyclic phosphate + choline. It carries out the reaction a 1-acyl-sn-glycero-3-phosphoethanolamine = a 1-acyl-sn-glycero-2,3-cyclic phosphate + ethanolamine. Dermonecrotic toxins cleave the phosphodiester linkage between the phosphate and headgroup of certain phospholipids (sphingolipid and lysolipid substrates), forming an alcohol (often choline) and a cyclic phosphate. This toxin acts on sphingomyelin (SM). It may also act on ceramide phosphoethanolamine (CPE), lysophosphatidylcholine (LPC) and lysophosphatidylethanolamine (LPE), but not on lysophosphatidylserine (LPS), and lysophosphatidylglycerol (LPG). It acts by transphosphatidylation, releasing exclusively cyclic phosphate products as second products. Induces dermonecrosis, hemolysis, increased vascular permeability, edema, inflammatory response, and platelet aggregation. This chain is Dermonecrotic toxin LruSicTox-alphaIC1a, found in Loxosceles rufescens (Mediterranean recluse spider).